Consider the following 185-residue polypeptide: Bacteriocin UviA (185 aa).

Its function is as follows. May have a role in bacteriocin secretion or immunity. The sequence is that of Bacteriocin UviA (uviA) from Clostridium perfringens.